A 186-amino-acid chain; its full sequence is MGLTETLSKPGEMFGDMFQVATLDNVVQWGQSFSLWPYPFATACCGIEYMSTACADYDIARFGAERPSFSPRQADMILVLGTITYKMAPVLRQIYDQLAEPKFVISVGACASSGGMFHTYGVLQGVDRILPVDVYVPGCPPRPEAILDALVKLQKKVQSQGLEARRQEVMRKIEEINERNKPLVVA.

4 residues coordinate [4Fe-4S] cluster: cysteine 44, cysteine 45, cysteine 110, and cysteine 139.

Belongs to the complex I 20 kDa subunit family. As to quaternary structure, NDH-1 is composed of 14 different subunits. Subunits NuoB, C, D, E, F, and G constitute the peripheral sector of the complex. Requires [4Fe-4S] cluster as cofactor.

It is found in the cell inner membrane. The catalysed reaction is a quinone + NADH + 5 H(+)(in) = a quinol + NAD(+) + 4 H(+)(out). In terms of biological role, NDH-1 shuttles electrons from NADH, via FMN and iron-sulfur (Fe-S) centers, to quinones in the respiratory chain. The immediate electron acceptor for the enzyme in this species is believed to be ubiquinone. Couples the redox reaction to proton translocation (for every two electrons transferred, four hydrogen ions are translocated across the cytoplasmic membrane), and thus conserves the redox energy in a proton gradient. This Leptospira biflexa serovar Patoc (strain Patoc 1 / Ames) protein is NADH-quinone oxidoreductase subunit B.